A 70-amino-acid chain; its full sequence is Gene 4.3 protein (70 aa).

The polypeptide is Gene 4.3 protein (4.3) (Escherichia coli (Bacteriophage T3)).